The following is a 390-amino-acid chain: Putative RING-H2 finger protein ATL12 (390 aa).

Positions 1 to 22 (MNSPQEISILFFFIIFLDYVSA) are cleaved as a signal peptide. Residues 41-61 (LAIITGVFSIVFTLTFVLLVY) form a helical membrane-spanning segment. The RING-type; atypical zinc-finger motif lies at 124 to 166 (CSVCLSKFEDVEILRLLPKCRHAFHIGCIDQWLEQHATCPLCR).

This sequence belongs to the RING-type zinc finger family. ATL subfamily.

The protein resides in the membrane. It carries out the reaction S-ubiquitinyl-[E2 ubiquitin-conjugating enzyme]-L-cysteine + [acceptor protein]-L-lysine = [E2 ubiquitin-conjugating enzyme]-L-cysteine + N(6)-ubiquitinyl-[acceptor protein]-L-lysine.. The protein operates within protein modification; protein ubiquitination. This chain is Putative RING-H2 finger protein ATL12 (ATL12), found in Arabidopsis thaliana (Mouse-ear cress).